Reading from the N-terminus, the 30-residue chain is 2S seed storage-like protein (30 aa).

It belongs to the 2S seed storage albumins family. The mature protein is a heterodimer of a small and a large chain linked by 2 disulfide bonds. As to expression, extracted from castor bean.

Functionally, this is a 2S seed storage protein. Inhibits spore germination in R.solani and F.oxysporum. Exhibits anti-trypsin activity. The polypeptide is 2S seed storage-like protein (Ricinus communis (Castor bean)).